Here is a 183-residue protein sequence, read N- to C-terminus: Acidic proline-rich protein HP43A (183 aa).

A signal peptide spans 1 to 14; sequence MLVVLLTAALLAEH. Residues 22-183 are disordered; the sequence is ISQLSEEEQQ…QGSEEQSTSL (162 aa). The segment covering 52–65 has biased composition (acidic residues); that stretch reads SDEEGDDDGEEDGN. 5 consecutive repeat copies span residues 81-100, 101-120, 121-140, 141-160, and 161-180. The span at 86–183 shows a compositional bias: low complexity; sequence GNQQGPPQQE…QGSEEQSTSL (98 aa).

The protein resides in the secreted. This is Acidic proline-rich protein HP43A (H29) from Mesocricetus auratus (Golden hamster).